Here is a 164-residue protein sequence, read N- to C-terminus: Phosphopantetheine adenylyltransferase (164 aa).

Ser9 contributes to the substrate binding site. ATP-binding positions include 9 to 10 (SF) and His17. 3 residues coordinate substrate: Lys41, Leu73, and Lys87. ATP-binding positions include 88–90 (GLR), Glu98, and 123–129 (YSYISSS).

The protein belongs to the bacterial CoaD family. Homohexamer. It depends on Mg(2+) as a cofactor.

Its subcellular location is the cytoplasm. It carries out the reaction (R)-4'-phosphopantetheine + ATP + H(+) = 3'-dephospho-CoA + diphosphate. Its pathway is cofactor biosynthesis; coenzyme A biosynthesis; CoA from (R)-pantothenate: step 4/5. Reversibly transfers an adenylyl group from ATP to 4'-phosphopantetheine, yielding dephospho-CoA (dPCoA) and pyrophosphate. The polypeptide is Phosphopantetheine adenylyltransferase (Clostridium perfringens (strain ATCC 13124 / DSM 756 / JCM 1290 / NCIMB 6125 / NCTC 8237 / Type A)).